We begin with the raw amino-acid sequence, 370 residues long: Actin-related protein 2/3 complex subunit 1A (370 aa).

6 WD repeats span residues 6 to 45 (FLLE…WTKA), 50 to 89 (EHNG…WKPT), 140 to 179 (PIRS…VDEK), 202 to 241 (GTGG…QVST), 244 to 284 (TEFL…TFVS), and 322 to 365 (LHQN…SSIQ).

The protein belongs to the WD repeat ARPC1 family. Probable component of the Arp2/3 complex in which it may replace ARPC1B.

Its subcellular location is the cytoplasm. The protein resides in the cytoskeleton. It localises to the nucleus. In terms of biological role, probably functions as a component of the Arp2/3 complex which is involved in regulation of actin polymerization and together with an activating nucleation-promoting factor (NPF) mediates the formation of branched actin networks. In addition to its role in the cytoplasmic cytoskeleton, the Arp2/3 complex also promotes actin polymerization in the nucleus, thereby regulating gene transcription and repair of damaged DNA. In Mus musculus (Mouse), this protein is Actin-related protein 2/3 complex subunit 1A (Arpc1a).